We begin with the raw amino-acid sequence, 79 residues long: D-alanyl carrier protein (79 aa).

The region spanning 1 to 77 (MDTKQAVLDI…KIIAKVESLR (77 aa)) is the Carrier domain. Serine 35 is subject to O-(pantetheine 4'-phosphoryl)serine.

This sequence belongs to the DltC family. 4'-phosphopantetheine is transferred from CoA to a specific serine of apo-DCP.

The protein resides in the cytoplasm. The protein operates within cell wall biogenesis; lipoteichoic acid biosynthesis. In terms of biological role, carrier protein involved in the D-alanylation of lipoteichoic acid (LTA). The loading of thioester-linked D-alanine onto DltC is catalyzed by D-alanine--D-alanyl carrier protein ligase DltA. The DltC-carried D-alanyl group is further transferred to cell membrane phosphatidylglycerol (PG) by forming an ester bond, probably catalyzed by DltD. D-alanylation of LTA plays an important role in modulating the properties of the cell wall in Gram-positive bacteria, influencing the net charge of the cell wall. The protein is D-alanyl carrier protein of Lactobacillus gasseri (strain ATCC 33323 / DSM 20243 / BCRC 14619 / CIP 102991 / JCM 1131 / KCTC 3163 / NCIMB 11718 / NCTC 13722 / AM63).